We begin with the raw amino-acid sequence, 76 residues long: Large ribosomal subunit protein eL20 (76 aa).

This sequence belongs to the eukaryotic ribosomal protein eL20 family. As to quaternary structure, part of the 50S ribosomal subunit. Binds 23S rRNA.

This chain is Large ribosomal subunit protein eL20, found in Methanococcus maripaludis (strain C7 / ATCC BAA-1331).